The sequence spans 140 residues: Lysozyme c-1 (140 aa).

Positions 1–20 (MKVFSTVLLAIVACCAVAEA) are cleaved as a signal peptide. A C-type lysozyme domain is found at 21 to 140 (KTFGKCELAK…KKLPNVSSCF (120 aa)). Disulfide bonds link C26-C139, C47-C128, C81-C94, and C90-C108. Catalysis depends on residues E52 and D69.

This sequence belongs to the glycosyl hydrolase 22 family. Expressed in salivary glands and Malpighian tubules.

The enzyme catalyses Hydrolysis of (1-&gt;4)-beta-linkages between N-acetylmuramic acid and N-acetyl-D-glucosamine residues in a peptidoglycan and between N-acetyl-D-glucosamine residues in chitodextrins.. Its function is as follows. Lysozymes have primarily a bacteriolytic function; those in tissues and body fluids are associated with the monocyte-macrophage system and enhance the activity of immunoagents. This Anopheles gambiae (African malaria mosquito) protein is Lysozyme c-1.